Reading from the N-terminus, the 499-residue chain is Cytochrome P450 ARB_01131 (499 aa).

Positions 1-21 are cleaved as a signal peptide; the sequence is MLSLIVACLVLPLICYKLVRS. Asparagine 23 carries N-linked (GlcNAc...) asparagine glycosylation. Cysteine 437 provides a ligand contact to heme.

This sequence belongs to the cytochrome P450 family. Requires heme as cofactor.

Functionally, together with an NADPH cytochrome P450 the enzyme system catalyzes the terminal hydroxylation as the first step in the assimilation of alkanes and fatty acids. This is Cytochrome P450 ARB_01131 from Arthroderma benhamiae (strain ATCC MYA-4681 / CBS 112371) (Trichophyton mentagrophytes).